The sequence spans 342 residues: Protein FinQ (342 aa).

The H-T-H motif DNA-binding region spans R208–S227.

Transcriptional inhibitor of the F plasmid transfer genes. FinQ may regulate a gene or genes encoded on the IncI plasmids, and coincidentally may inhibit F transfer when coresident. This Escherichia coli protein is Protein FinQ (finQ).